The chain runs to 324 residues: tRNA dimethylallyltransferase (324 aa).

Residue 17–24 (GPTASGKT) participates in ATP binding. Residue 19-24 (TASGKT) coordinates substrate. Interaction with substrate tRNA regions lie at residues 42-45 (DSAL), 166-170 (QRIQR), and 251-256 (RCVGYR).

Belongs to the IPP transferase family. As to quaternary structure, monomer. It depends on Mg(2+) as a cofactor.

The catalysed reaction is adenosine(37) in tRNA + dimethylallyl diphosphate = N(6)-dimethylallyladenosine(37) in tRNA + diphosphate. Its function is as follows. Catalyzes the transfer of a dimethylallyl group onto the adenine at position 37 in tRNAs that read codons beginning with uridine, leading to the formation of N6-(dimethylallyl)adenosine (i(6)A). The sequence is that of tRNA dimethylallyltransferase from Burkholderia pseudomallei (strain 668).